A 403-amino-acid polypeptide reads, in one-letter code: MATIEESLALIGRGAEEILKLDQLQARLATGKPLRVKAGFDPTAPDLHLGHTVLLNKMRQFQQLGHQVIFLIGDFTGMIGDPSGKNATRKPLSREDVLANARTYEEQVFKILDRERTEVRFNSEWFGQMSAADMIKLSAQHTVARMLERDDFAKRFGSQQPIAIHEFLYPLVQGYDSVALKADVELGGTDQKFNLLMGRGLQEHYGQAPQIVLTMPLLEGLDGVAKMSKSLGNYIGINEPAIDIVTKTMKIGDELTWRWIDLLSFDISLAEAARLKEQVAAGELHPREVKLRLARELATRFHDAATAEQAIAGWHAVVTGQGDTSLLPLQEVVVPDEGLRLAGLLTAAGLTPSNSEATRKLKERAVRIDGEVVEDPSRVFTHGFEGVIQVGKRNFARVLLVTA.

Positions 42-51 match the 'HIGH' region motif; that stretch reads PTAPDLHLGH. The 'KMSKS' region motif lies at 226-230; the sequence is KMSKS. Lys229 lines the ATP pocket. The region spanning 339-400 is the S4 RNA-binding domain; sequence LRLAGLLTAA…GKRNFARVLL (62 aa).

This sequence belongs to the class-I aminoacyl-tRNA synthetase family. TyrS type 2 subfamily. In terms of assembly, homodimer.

It is found in the cytoplasm. The catalysed reaction is tRNA(Tyr) + L-tyrosine + ATP = L-tyrosyl-tRNA(Tyr) + AMP + diphosphate + H(+). In terms of biological role, catalyzes the attachment of tyrosine to tRNA(Tyr) in a two-step reaction: tyrosine is first activated by ATP to form Tyr-AMP and then transferred to the acceptor end of tRNA(Tyr). This chain is Tyrosine--tRNA ligase, found in Xanthomonas euvesicatoria pv. vesicatoria (strain 85-10) (Xanthomonas campestris pv. vesicatoria).